The primary structure comprises 216 residues: MQAGKPVLYSYFRSSCSWRVRIALALKGIDYEIVPINLIKDGGQQFSEEFQTLNPMKQVPALKIDGITIGQSLAILEYLEETRPIPRLLPQDPQKRAIVRMISDLIASGIQPLQNLSVLKQVGQENQMPWAQKAITSGFNALEKILQSTAGKYCVGDEVSMADVCLAPQVANAERFKVDLSPYPTISHINKALLALEAFQVSHPCRQPDTPAELRT.

Methionine 1 is subject to N-acetylmethionine. Residues 4–87 (GKPVLYSYFR…YLEETRPIPR (84 aa)) enclose the GST N-terminal domain. Residues 14–19 (SSCSWR) and glutamine 45 contribute to the glutathione site. Residue lysine 57 is modified to N6-succinyllysine. Glutathione-binding positions include valine 59, 71 to 72 (QS), glutamine 111, and 115 to 117 (NLS). Residues 92–212 (DPQKRAIVRM…HPCRQPDTPA (121 aa)) form the GST C-terminal domain. Position 136 is a phosphothreonine (threonine 136). Serine 137 carries the phosphoserine modification. Residue lysine 177 is modified to N6-succinyllysine. Residue serine 181 is modified to Phosphoserine.

The protein belongs to the GST superfamily. Zeta family. Homodimer. Glutathione serves as cofactor. In terms of processing, the N-terminus is blocked.

Its subcellular location is the cytoplasm. It carries out the reaction 4-maleylacetoacetate = 4-fumarylacetoacetate. The enzyme catalyses RX + glutathione = an S-substituted glutathione + a halide anion + H(+). It participates in amino-acid degradation; L-phenylalanine degradation; acetoacetate and fumarate from L-phenylalanine: step 5/6. In terms of biological role, probable bifunctional enzyme showing minimal glutathione-conjugating activity with ethacrynic acid and 7-chloro-4-nitrobenz-2-oxa-1, 3-diazole and maleylacetoacetate isomerase activity. Also has low glutathione peroxidase activity with t-butyl and cumene hydroperoxides. Is able to catalyze the glutathione dependent oxygenation of dichloroacetic acid to glyoxylic acid. In Rattus norvegicus (Rat), this protein is Maleylacetoacetate isomerase (Gstz1).